A 348-amino-acid chain; its full sequence is Heptaprenyl diphosphate synthase component 2 (348 aa).

Residues lysine 73, arginine 76, and histidine 105 each coordinate isopentenyl diphosphate. Mg(2+)-binding residues include aspartate 112 and aspartate 116. Arginine 121 lines the all-trans-hexaprenyl diphosphate pocket. Arginine 122 serves as a coordination point for isopentenyl diphosphate. 3 residues coordinate all-trans-hexaprenyl diphosphate: lysine 198, threonine 199, and glutamine 236.

It belongs to the FPP/GGPP synthase family. As to quaternary structure, heterodimer of component I and II. It depends on Mg(2+) as a cofactor.

It carries out the reaction 4 isopentenyl diphosphate + (2E,6E)-farnesyl diphosphate = all-trans-heptaprenyl diphosphate + 4 diphosphate. Its function is as follows. Supplies heptaprenyl diphosphate, the precursor for the side chain of the isoprenoid quinone menaquinone-7 (MQ-7). This chain is Heptaprenyl diphosphate synthase component 2 (hepT), found in Bacillus subtilis (strain 168).